Here is a 485-residue protein sequence, read N- to C-terminus: Glutamyl-tRNA(Gln) amidotransferase subunit A (485 aa).

Catalysis depends on charge relay system residues Lys79 and Ser154. Ser178 functions as the Acyl-ester intermediate in the catalytic mechanism.

This sequence belongs to the amidase family. GatA subfamily. As to quaternary structure, heterotrimer of A, B and C subunits.

The catalysed reaction is L-glutamyl-tRNA(Gln) + L-glutamine + ATP + H2O = L-glutaminyl-tRNA(Gln) + L-glutamate + ADP + phosphate + H(+). In terms of biological role, allows the formation of correctly charged Gln-tRNA(Gln) through the transamidation of misacylated Glu-tRNA(Gln) in organisms which lack glutaminyl-tRNA synthetase. The reaction takes place in the presence of glutamine and ATP through an activated gamma-phospho-Glu-tRNA(Gln). The protein is Glutamyl-tRNA(Gln) amidotransferase subunit A of Staphylococcus epidermidis (strain ATCC 35984 / DSM 28319 / BCRC 17069 / CCUG 31568 / BM 3577 / RP62A).